A 361-amino-acid chain; its full sequence is D-alanine--D-alanine ligase (361 aa).

An ATP-grasp domain is found at K149–Q353. K176–E231 lines the ATP pocket. Mg(2+) contacts are provided by D308, E320, and N322.

The protein belongs to the D-alanine--D-alanine ligase family. The cofactor is Mg(2+). Mn(2+) is required as a cofactor.

The protein resides in the cytoplasm. The catalysed reaction is 2 D-alanine + ATP = D-alanyl-D-alanine + ADP + phosphate + H(+). It participates in cell wall biogenesis; peptidoglycan biosynthesis. In terms of biological role, cell wall formation. The sequence is that of D-alanine--D-alanine ligase from Corynebacterium efficiens (strain DSM 44549 / YS-314 / AJ 12310 / JCM 11189 / NBRC 100395).